A 1032-amino-acid chain; its full sequence is Toll-like receptor 9 (1032 aa).

The signal sequence occupies residues 1–25 (MGFCRSALHPLSLLVQAIMLAMTLA). Over 26–818 (LGTLPAFLPC…CLDEALSWDC (793 aa)) the chain is Extracellular. A disulfide bond links C35 and C45. 47 to 51 (WLFLK) lines the DNA pocket. LRR repeat units follow at residues 62–85 (RGNVTSLSLSSNRIHHLHDSDFAH), 87–110 (PSLRHLNLKWNCPPVGLSPMHFPC), 122–147 (VPTLEELNLSYNNIMTVPALPKSLIS), 150–166 (LSHTNILMLDSASLAGL), 167–190 (HALRFLFMDGNCYYKNPCRQALEV), 198–221 (LGNLTHLSLKYNNLTVVPRNLPSS), 223–242 (EYLLLSYNRIVKLAPEDLAN), 243–268 (LTALRVLDVGGNCRRCDHAPNPCMEC), 283–306 (LSRLEGLVLKDSSLSWLNASWFRG), 308–332 (GNLRVLDLSENFLYKCITKTKAFQG), 333–356 (LTQLRKLNLSFNYQKRVSFAHLSL), 363–386 (LVALKELDMHGIFFRSLDETTLRP), 390–413 (LPMLQTLRLQMNFINQAQLGIFRA), and 415–440 (PGLRYVDLSDNRISGASELTATMGEA). N64 is a glycosylation site (N-linked (GlcNAc...) asparagine). Residues 72–77 (SNRIHH) and 95–109 (KWNCPPVGLSPMHFP) each bind DNA. A disulfide bridge links C98 with C110. N-linked (GlcNAc...) asparagine glycosylation occurs at N129. Y132 serves as a coordination point for DNA. The cysteines at positions 178 and 184 are disulfide-linked. 179-181 (YYK) lines the DNA pocket. N-linked (GlcNAc...) asparagine glycosylation occurs at N200. Y208 contacts DNA. N-linked (GlcNAc...) asparagine glycosylation is found at N210 and N242. Intrachain disulfides connect C255–C268 and C258–C265. S-palmitoyl cysteine attachment occurs at residues C258 and C265. A glycan (N-linked (GlcNAc...) asparagine) is linked at N300. The N-linked (GlcNAc...) asparagine glycan is linked to N340. N469, N474, and N513 each carry an N-linked (GlcNAc...) asparagine glycan. LRR repeat units lie at residues 470-494 (CSTLNFTLDLSRNNLVTVQPEMFAQ), 496-519 (SHLQCLRLSHNCISQAVNGSQFLP), 520-543 (LTGLQVLDLSHNKLDLYHEHSFTE), 545-572 (PRLEALDLSYNSQPFGMQGVGHNFSFVA), 574-598 (LRTLRHLSLAHNNIHSQVSQQLCST), 600-622 (LRALDFSGNALGHMWAEGDLYLH), 627-650 (LSGLIWLDLSQNRLHTLLPQTLRN), 652-675 (PKSLQVLRLRDNYLAFFKWWSLHF), 676-699 (LPKLEVLDLAGNQLKALTNGSLPA), 701-723 (TRLRRLDVSCNSISFVAPGFFSK), 724-747 (AKELRELNLSANALKTVDHSWFGP), and 749-772 (ASALQILDVSANPLHCACGAAFMD). C470 and C500 form a disulfide bridge. An N-linked (GlcNAc...) asparagine glycan is attached at N567. N-linked (GlcNAc...) asparagine glycosylation is present at N694. N-linked (GlcNAc...) asparagine glycosylation is present at N731. Disulfide bonds link C764–C790 and C766–C809. A helical transmembrane segment spans residues 819–839 (FALSLLAVALGLGVPMLHHLC). The Cytoplasmic segment spans residues 840–1032 (GWDLWYCFHL…RNFCQGPTAE (193 aa)). In terms of domain architecture, TIR spans 868-1013 (LPYDAFVVFD…SFWAQLGMAL (146 aa)).

It belongs to the Toll-like receptor family. As to quaternary structure, monomer and homodimer. Exists as a monomer in the absence of unmethylated cytidine-phosphate-guanosine (CpG) ligand. Proteolytic processing of an insertion loop (Z-loop) is required for homodimerization upon binding to the unmethylated CpG ligand leading to its activation. Interacts with MYD88 via their respective TIR domains. Interacts with BTK. Interacts (via transmembrane domain) with UNC93B1. Interacts with CD300LH; the interaction may promote full activation of TLR9-triggered innate responses. Interacts with CNPY3 and HSP90B1; this interaction is required for proper folding in the endoplasmic reticulum. Interacts with SMPDL3B. Interacts with CD82; this interaction is essential for TLR9-dependent myddosome formation in response to CpG stimulation. Activated by proteolytic cleavage of the flexible loop between repeats LRR14 and LRR15 within the ectodomain. Cleavage requires UNC93B1. Proteolytically processed by first removing the majority of the ectodomain by either asparagine endopeptidase (AEP) or a cathepsin followed by a trimming event that is solely cathepsin mediated and required for optimal receptor signaling. Post-translationally, palmitoylated by ZDHHC3 in the Golgi regulates TLR9 trafficking from the Golgi to endosomes. Depalmitoylation by PPT1 controls the release of TLR9 from UNC93B1 in endosomes. Highly expressed in spleen, lymph node, tonsil and peripheral blood leukocytes, especially in plasmacytoid pre-dendritic cells. Levels are much lower in monocytes and CD11c+ immature dendritic cells. Also detected in lung and liver.

The protein localises to the endoplasmic reticulum membrane. Its subcellular location is the early endosome membrane. The protein resides in the lysosome. It localises to the cytoplasmic vesicle. It is found in the phagosome. The protein localises to the golgi apparatus membrane. Key component of innate and adaptive immunity. TLRs (Toll-like receptors) control host immune response against pathogens through recognition of molecular patterns specific to microorganisms. TLR9 is a nucleotide-sensing TLR which is activated by unmethylated cytidine-phosphate-guanosine (CpG) dinucleotides. Acts via MYD88 and TRAF6, leading to NF-kappa-B activation, cytokine secretion and the inflammatory response. Controls lymphocyte response to Helicobacter infection. Upon CpG stimulation, induces B-cell proliferation, activation, survival and antibody production. In Homo sapiens (Human), this protein is Toll-like receptor 9 (TLR9).